We begin with the raw amino-acid sequence, 173 residues long: Protein MOTHER of FT and TFL1 (173 aa).

Residue alanine 2 is modified to N-acetylalanine.

The protein belongs to the phosphatidylethanolamine-binding protein family. In terms of tissue distribution, expressed in gametophytes and developing seeds.

The protein localises to the cytoplasm. In terms of biological role, may form complexes with phosphorylated ligands by interfering with kinases and their effectors. Regulates seed germination via the abscisic acid (ABA) and gibberellic acid (GA)signaling pathways. During seed germination, MFT expression is directly repressed by ABI3 or promoted by ABI5 in the ABA signaling pathway. Involved in a negative feedback regulation of ABA signaling. Promotes embryo growth by direct repression of ABI5. In the GA signaling pathway, MFT expression is promoted by the DELLA protein RGL2 during seed germination. May regulate seed germination and fertility through the brassinosteroid (BR) signaling pathway. This is Protein MOTHER of FT and TFL1 (MFT) from Arabidopsis thaliana (Mouse-ear cress).